The primary structure comprises 95 residues: Aspartyl/glutamyl-tRNA(Asn/Gln) amidotransferase subunit C (95 aa).

Belongs to the GatC family. Heterotrimer of A, B and C subunits.

The enzyme catalyses L-glutamyl-tRNA(Gln) + L-glutamine + ATP + H2O = L-glutaminyl-tRNA(Gln) + L-glutamate + ADP + phosphate + H(+). It catalyses the reaction L-aspartyl-tRNA(Asn) + L-glutamine + ATP + H2O = L-asparaginyl-tRNA(Asn) + L-glutamate + ADP + phosphate + 2 H(+). Functionally, allows the formation of correctly charged Asn-tRNA(Asn) or Gln-tRNA(Gln) through the transamidation of misacylated Asp-tRNA(Asn) or Glu-tRNA(Gln) in organisms which lack either or both of asparaginyl-tRNA or glutaminyl-tRNA synthetases. The reaction takes place in the presence of glutamine and ATP through an activated phospho-Asp-tRNA(Asn) or phospho-Glu-tRNA(Gln). In Chromobacterium violaceum (strain ATCC 12472 / DSM 30191 / JCM 1249 / CCUG 213 / NBRC 12614 / NCIMB 9131 / NCTC 9757 / MK), this protein is Aspartyl/glutamyl-tRNA(Asn/Gln) amidotransferase subunit C.